A 295-amino-acid chain; its full sequence is UDP-N-acetylenolpyruvoylglucosamine reductase (295 aa).

Residues 23–188 (KVGGPADFLA…ISAKFALKPG (166 aa)) enclose the FAD-binding PCMH-type domain. Residue Arg-167 is part of the active site. Ser-217 acts as the Proton donor in catalysis. Glu-287 is a catalytic residue.

It belongs to the MurB family. Requires FAD as cofactor.

The protein resides in the cytoplasm. It carries out the reaction UDP-N-acetyl-alpha-D-muramate + NADP(+) = UDP-N-acetyl-3-O-(1-carboxyvinyl)-alpha-D-glucosamine + NADPH + H(+). The protein operates within cell wall biogenesis; peptidoglycan biosynthesis. Cell wall formation. In Streptococcus pyogenes serotype M6 (strain ATCC BAA-946 / MGAS10394), this protein is UDP-N-acetylenolpyruvoylglucosamine reductase.